A 78-amino-acid chain; its full sequence is Large ribosomal subunit protein bL28 (78 aa).

The disordered stretch occupies residues 1–23; the sequence is MSRVCQVTGKKPMVGNNRSHAKN.

It belongs to the bacterial ribosomal protein bL28 family.

This chain is Large ribosomal subunit protein bL28, found in Shewanella sediminis (strain HAW-EB3).